The primary structure comprises 258 residues: tRNA (guanine-N(1)-)-methyltransferase (258 aa).

Residues Gly122 and 142-147 (LGDFVL) contribute to the S-adenosyl-L-methionine site.

The protein belongs to the RNA methyltransferase TrmD family. In terms of assembly, homodimer.

The protein localises to the cytoplasm. It carries out the reaction guanosine(37) in tRNA + S-adenosyl-L-methionine = N(1)-methylguanosine(37) in tRNA + S-adenosyl-L-homocysteine + H(+). Its function is as follows. Specifically methylates guanosine-37 in various tRNAs. This chain is tRNA (guanine-N(1)-)-methyltransferase, found in Hahella chejuensis (strain KCTC 2396).